A 330-amino-acid polypeptide reads, in one-letter code: MTAGSKVFSNDSVRSSSFKSIKIVIVGAGNVGSTTAFTLLLSGLAAEIVIIDLNKKKAEGEAMDLNHAAPLSHETRVYLGDYKDCKDATAVVITAGKNQKPGETRMDLLKANISIFKEILREVTKYTKDAILLVATNPVDVLTYATLKLTGFPAERVIGSGTIIDTARFQYLIGKLYGLDPQSVNADIIGEHGDSELAVWSHASIAGLSLADFCEESETKYDEQALNECFKETKNAAYDIIQRKGSTEYGVAAGLVRILAAIIRDENALLTVSGLDSYSNIGDVCFSMPRKLNKDGAHRIINAKLSKDEDAKLVESVKSIKHAIESIGLN.

Residues Arg-105, Asn-137, and Arg-168 each contribute to the substrate site. Residue Asn-137 participates in NAD(+) binding. The active-site Proton acceptor is His-192.

This sequence belongs to the LDH/MDH superfamily. LDH family. Homotetramer.

It localises to the cytoplasm. The catalysed reaction is (S)-lactate + NAD(+) = pyruvate + NADH + H(+). The protein operates within fermentation; pyruvate fermentation to lactate; (S)-lactate from pyruvate: step 1/1. This Schizosaccharomyces pombe (strain 972 / ATCC 24843) (Fission yeast) protein is Probable L-lactate dehydrogenase.